Consider the following 1501-residue polypeptide: Protein SNQ2 (1501 aa).

The span at 1 to 17 (MSNIKSTQDSSHNAVAR) shows a compositional bias: polar residues. The segment at 1 to 56 (MSNIKSTQDSSHNAVARSSSASFAASEESFTGITHDKDEQSDTPADKLTKMLTGPA) is disordered. At serine 2 the chain carries N-acetylserine. Over residues 18–30 (SSSASFAASEESF) the composition is skewed to low complexity. Serine 26 and serine 29 each carry phosphoserine. Over residues 34–49 (THDKDEQSDTPADKLT) the composition is skewed to basic and acidic residues. Residues serine 64, serine 80, and serine 86 each carry the phosphoserine modification. Residues 161-410 (FKGIKAKRHQ…FAKMGYLCPP (250 aa)) form the ABC transporter 1 domain. N-linked (GlcNAc...) asparagine glycosylation is found at asparagine 273, asparagine 334, and asparagine 518. 5 helical membrane passes run 521-541 (YTVI…SLFY), 554-574 (GGVL…NISF), 600-620 (LASF…LFFL), 628-648 (GSFF…NGLF), and 664-680 (ISGI…TYMI). Residue asparagine 730 is glycosylated (N-linked (GlcNAc...) asparagine). Residues 771–789 (FGILWCFLLGYVVLKVIFT) traverse the membrane as a helical segment. An ABC transporter 2 domain is found at 853–1095 (FIWKDVCFTI…ILNYFERNGA (243 aa)). Asparagine 874 is a glycosylation site (N-linked (GlcNAc...) asparagine). 889 to 896 (GESGAGKT) is an ATP binding site. Phosphothreonine is present on threonine 1153. A run of 4 helical transmembrane segments spans residues 1190–1212 (IMSK…FNVG), 1216–1236 (VGLQ…APAM), 1277–1296 (HLFF…RIFF), and 1333–1352 (ANVI…GVTQ). An N-linked (GlcNAc...) asparagine glycan is attached at asparagine 1401. The chain crosses the membrane as a helical span at residues 1455 to 1475 (FGIFWIYIFFNIIAMVCVYYL).

The protein belongs to the ABC transporter superfamily. ABCG family. PDR (TC 3.A.1.205) subfamily.

It localises to the membrane. Functionally, could be an ATP-dependent permease. Confers hyper-resistance to the mutagens 4-nitroquinoline-N-oxide (4-NQO) and triaziquone, as well as to the chemicals sulphomethuron methyl phenanthroline when present in multiple copies. Exhibits nucleoside triphosphatase activity. In Saccharomyces cerevisiae (strain ATCC 204508 / S288c) (Baker's yeast), this protein is Protein SNQ2 (SNQ2).